The chain runs to 584 residues: Membrane frizzled-related protein (584 aa).

Residues 1–69 (MKDYDDVILR…QPDCHFSWFC (69 aa)) lie on the Cytoplasmic side of the membrane. A helical; Signal-anchor for type II membrane protein membrane pass occupies residues 70 to 90 (ILLLSGLLLLLLGLLVAVILA). Topologically, residues 91–584 (QLQATSLPRT…AASLEACSQP (494 aa)) are extracellular. Residues 108 to 140 (RGLTPMGVIPSTTPNTTTTTTTTTPARTGQQEA) form a disordered region. Residues 119-132 (TTPNTTTTTTTTTP) show a composition bias toward low complexity. Intrachain disulfides connect Cys-150-Cys-176 and Cys-203-Cys-222. Residues 150–259 (CGGLLPGPSG…SGFQAWYQAV (110 aa)) enclose the CUB 1 domain. N-linked (GlcNAc...) asparagine glycosylation is present at Asn-233. The LDL-receptor class A 1 domain maps to 265–301 (SCAHNEFHCDLLLCLKRDSVCDGITECADGSDEANCS). 5 cysteine pairs are disulfide-bonded: Cys-266/Cys-278, Cys-273/Cys-291, Cys-285/Cys-300, Cys-307/Cys-333, and Cys-360/Cys-383. Residues 307–420 (CGGNLTGLYG…GGFLATYQAI (114 aa)) enclose the CUB 2 domain. N-linked (GlcNAc...) asparagine glycosylation is present at Asn-421. The LDL-receptor class A 2 domain occupies 426–460 (GCPWAEFCQSGGYRDLQWMCDLWKDCANDSNDNCS). Disulfide bonds link Cys-433-Cys-451, Cys-445-Cys-459, Cys-471-Cys-533, Cys-479-Cys-526, Cys-517-Cys-554, Cys-543-Cys-581, and Cys-547-Cys-569. Asn-458 carries N-linked (GlcNAc...) asparagine glycosylation. Residues 466–584 (QPDLTCEPVQ…AASLEACSQP (119 aa)) form the FZ domain.

In terms of assembly, interacts with C1QTNF5. In terms of tissue distribution, expressed in retinal pigment epithelium and ciliary epithelium of the eye.

It is found in the apical cell membrane. May play a role in eye development. The chain is Membrane frizzled-related protein (Mfrp) from Mus musculus (Mouse).